Consider the following 278-residue polypeptide: Digeranylgeranylglyceryl phosphate synthase (278 aa).

Helical transmembrane passes span 12–32 (LKNC…ASYF), 34–54 (ISMI…CGFG), 91–111 (LLVV…LMAV), 142–162 (VFIF…LFLC), 204–224 (FLLV…FFGI), 226–246 (YLIS…NLVM), and 257–277 (SRNI…GSLF).

The protein belongs to the UbiA prenyltransferase family. DGGGP synthase subfamily. Mg(2+) is required as a cofactor.

The protein localises to the cell membrane. The catalysed reaction is sn-3-O-(geranylgeranyl)glycerol 1-phosphate + (2E,6E,10E)-geranylgeranyl diphosphate = 2,3-bis-O-(geranylgeranyl)-sn-glycerol 1-phosphate + diphosphate. The protein operates within membrane lipid metabolism; glycerophospholipid metabolism. Its function is as follows. Prenyltransferase that catalyzes the transfer of the geranylgeranyl moiety of geranylgeranyl diphosphate (GGPP) to the C2 hydroxyl of (S)-3-O-geranylgeranylglyceryl phosphate (GGGP). This reaction is the second ether-bond-formation step in the biosynthesis of archaeal membrane lipids. This Methanococcus maripaludis (strain C6 / ATCC BAA-1332) protein is Digeranylgeranylglyceryl phosphate synthase.